Here is a 660-residue protein sequence, read N- to C-terminus: Oligopeptide-binding protein AliA (660 aa).

The N-terminal stretch at 1–22 (MKSSKLFALAGVTLLAATTLAA) is a signal peptide. Residue cysteine 23 is the site of N-palmitoyl cysteine attachment. Cysteine 23 carries the S-diacylglycerol cysteine lipid modification. The tract at residues 638 to 660 (EKWMKEKEESNKKAQEDLAKHVK) is disordered.

Belongs to the bacterial solute-binding protein 5 family.

It localises to the cell membrane. In terms of biological role, part of the binding-protein-dependent transport system for oligopeptides; probably an oligopeptide binding protein. The chain is Oligopeptide-binding protein AliA (aliA) from Streptococcus pneumoniae serotype 4 (strain ATCC BAA-334 / TIGR4).